Reading from the N-terminus, the 229-residue chain is DNA transfer protein gp7 (229 aa).

Residues 14–36 are disordered; the sequence is EEPLYPEKGGKGGSSSSGAKEAA.

Belongs to the podoviruses gp7 family.

Its function is as follows. Component of the phage injection machinery. Required for injection of the phage DNA into the host. In Salmonella typhimurium (Bacteriophage ST64T), this protein is DNA transfer protein gp7 (7).